Here is a 321-residue protein sequence, read N- to C-terminus: Epoxyqueuosine reductase (321 aa).

The active-site Proton donor is Asp137. One can recognise a 4Fe-4S ferredoxin-type domain in the interval 179–211; sequence EPLNADPPARSLCGRCSACIDACPTHAIREPFV. [4Fe-4S] cluster is bound by residues Cys191, Cys194, Cys197, Cys201, Cys217, Cys245, Cys248, and Cys252.

It belongs to the QueG family. Monomer. It depends on cob(II)alamin as a cofactor. The cofactor is [4Fe-4S] cluster.

It localises to the cytoplasm. It carries out the reaction epoxyqueuosine(34) in tRNA + AH2 = queuosine(34) in tRNA + A + H2O. It functions in the pathway tRNA modification; tRNA-queuosine biosynthesis. Catalyzes the conversion of epoxyqueuosine (oQ) to queuosine (Q), which is a hypermodified base found in the wobble positions of tRNA(Asp), tRNA(Asn), tRNA(His) and tRNA(Tyr). The chain is Epoxyqueuosine reductase from Synechococcus sp. (strain CC9605).